A 140-amino-acid chain; its full sequence is Cysteine desulfuration protein SufE (140 aa).

C51 functions as the Cysteine persulfide intermediate in the catalytic mechanism.

It belongs to the SufE family. As to quaternary structure, homodimer. Interacts with SufS.

The protein resides in the cytoplasm. It participates in cofactor biosynthesis; iron-sulfur cluster biosynthesis. Functionally, participates in cysteine desulfuration mediated by SufS. Cysteine desulfuration mobilizes sulfur from L-cysteine to yield L-alanine and constitutes an essential step in sulfur metabolism for biosynthesis of a variety of sulfur-containing biomolecules. Functions as a sulfur acceptor for SufS, by mediating the direct transfer of the sulfur atom from the S-sulfanylcysteine of SufS, an intermediate product of cysteine desulfuration process. This is Cysteine desulfuration protein SufE from Yersinia pestis bv. Antiqua (strain Antiqua).